Here is a 412-residue protein sequence, read N- to C-terminus: Double C2-like domain-containing protein beta (412 aa).

Residues 1 to 36 (MTLRRRGEKATISIQEHMAIDVCPGPIRPIKQISDY) are negatively regulates targeting to plasma membrane. The segment at 1–90 (MTLRRRGEKA…EDVDQLFGAY (90 aa)) is mediates interaction with DYNLT1. Residues 38–123 (PRFPRGLPPT…PDADGYESDD (86 aa)) form a disordered region. The segment covering 49–73 (APRASAPPDAPARSPAATAGPRSPS) has biased composition (low complexity). Positions 95–108 (GPSPGPSPVRPPAK) are enriched in pro residues. Over residues 112–123 (DEPDADGYESDD) the composition is skewed to acidic residues. C2 domains are found at residues 126 to 250 (ALGT…SICL) and 266 to 399 (ERGR…ERWH). D157, D163, D218, D220, D297, D303, D357, D359, and D365 together coordinate Ca(2+). A mediates interaction with STXBP3 region spans residues 257–375 (DKAEDKSLEE…FIGGVVLGIN (119 aa)). A Phosphoserine modification is found at S411.

Interacts with STX4; the interaction is calcium-dependent, increased by insulin and glucose, and mediates vesicle fusion with plasma membrane in pancreatic cells and adipocytes. Interacts with STXBP3; the interaction is direct, occurs at the cell membrane and regulates glucose-stimulated insulin secretion. Interacts with cytoplasmic dynein light chain DYNLT1. Interacts with the SNARE (soluble N-ethylmaleimide-sensitive factor attached protein receptor) complex composed of SNAP25, STX1A and VAMP2; the interaction is calcium-dependent and competitive with SYT1. May interact with UNC13A; the interaction mediates targeting to the plasma membrane. It depends on Ca(2+) as a cofactor. In terms of tissue distribution, expressed in brain; highly enriched in neurons.

It localises to the cytoplasm. Its subcellular location is the cytoplasmic granule. It is found in the cell membrane. Functionally, calcium sensor which positively regulates SNARE-dependent fusion of vesicles with membranes. Binds phospholipids in a calcium-dependent manner and may act at the priming stage of fusion by modifying membrane curvature to stimulate fusion. Involved in calcium-triggered exocytosis in chromaffin cells and calcium-dependent spontaneous release of neurotransmitter in absence of action potentials in neuronal cells. Involved both in glucose-stimulated insulin secretion in pancreatic cells and insulin-dependent GLUT4 transport to the plasma membrane in adipocytes. The polypeptide is Double C2-like domain-containing protein beta (Doc2b) (Rattus norvegicus (Rat)).